Here is a 396-residue protein sequence, read N- to C-terminus: Beta-1,4-galactosyltransferase 3 (396 aa).

At 1-10 the chain is on the cytoplasmic side; that stretch reads MLRRLLERPC. The chain crosses the membrane as a helical; Signal-anchor for type II membrane protein span at residues 11 to 31; it reads TLALLVGSQLAVMMYLSLGGF. At 32–396 the chain is on the lumenal side; it reads RSLSALFGRE…ANHTAPHGSH (365 aa). Asparagine 57 is a glycosylation site (N-linked (GlcNAc...) asparagine). An intrachain disulfide couples cysteine 80 to cysteine 122. Position 133 to 137 (133 to 137) interacts with UDP-alpha-D-galactose; sequence PHRAR. The N-linked (GlcNAc...) asparagine glycan is linked to asparagine 169. UDP-alpha-D-galactose contacts are provided by residues 172-174, 199-200, tyrosine 229, and tryptophan 261; these read FNR and VD. Residues cysteine 193 and cysteine 212 are joined by a disulfide bond. Aspartate 200 is a Mn(2+) binding site. 263 to 266 provides a ligand contact to N-acetyl-D-glucosamine; that stretch reads GEDD. Mn(2+) is bound at residue histidine 294. A UDP-alpha-D-galactose-binding site is contributed by 294-296; it reads HRG. An N-acetyl-D-glucosamine-binding site is contributed by arginine 306. Residue asparagine 340 is glycosylated (N-linked (GlcNAc...) asparagine). Residues 341–396 form a disordered region; the sequence is ITADIGTDPRGPRTSSGPHYPPGSSQAFRQEMLQRRPPARPGPLPTANHTAPHGSH. The span at 353–368 shows a compositional bias: polar residues; sequence RTSSGPHYPPGSSQAF. A glycan (N-linked (GlcNAc...) asparagine) is linked at asparagine 388.

Belongs to the glycosyltransferase 7 family. The cofactor is Mn(2+).

The protein localises to the golgi apparatus. It localises to the golgi stack membrane. The enzyme catalyses an N-acetyl-beta-D-glucosaminyl derivative + UDP-alpha-D-galactose = a beta-D-galactosyl-(1-&gt;4)-N-acetyl-beta-D-glucosaminyl derivative + UDP + H(+). The catalysed reaction is N-acetyl-D-glucosamine + UDP-alpha-D-galactose = beta-D-galactosyl-(1-&gt;4)-N-acetyl-D-glucosamine + UDP + H(+). It carries out the reaction a beta-D-GlcNAc-(1-&gt;3)-beta-D-Gal-(1-&gt;4)-beta-D-Glc-(1&lt;-&gt;1)-Cer(d18:1(4E)) + UDP-alpha-D-galactose = a neolactoside nLc4Cer(d18:1(4E)) + UDP + H(+). It catalyses the reaction a beta-D-glucosylceramide + UDP-alpha-D-galactose = a beta-D-galactosyl-(1-&gt;4)-beta-D-glucosyl-(1&lt;-&gt;1)-ceramide + UDP + H(+). The enzyme catalyses a neolactoside IV(3)-beta-GlcNAc-nLc4Cer + UDP-alpha-D-galactose = a neolactoside nLc6Cer + UDP + H(+). Its pathway is protein modification; protein glycosylation. Functionally, responsible for the synthesis of complex-type N-linked oligosaccharides in many glycoproteins as well as the carbohydrate moieties of glycolipids. The sequence is that of Beta-1,4-galactosyltransferase 3 (B4GALT3) from Bos taurus (Bovine).